A 498-amino-acid chain; its full sequence is Glutamate--tRNA ligase (498 aa).

Positions 10 to 20 (PSPTGYFHIGG) match the 'HIGH' region motif. The short motif at 252–256 (KLSKR) is the 'KMSKS' region element. Lys255 contributes to the ATP binding site.

This sequence belongs to the class-I aminoacyl-tRNA synthetase family. Glutamate--tRNA ligase type 1 subfamily. Monomer.

It is found in the cytoplasm. The catalysed reaction is tRNA(Glu) + L-glutamate + ATP = L-glutamyl-tRNA(Glu) + AMP + diphosphate. Its function is as follows. Catalyzes the attachment of glutamate to tRNA(Glu) in a two-step reaction: glutamate is first activated by ATP to form Glu-AMP and then transferred to the acceptor end of tRNA(Glu). The protein is Glutamate--tRNA ligase of Mycoplasmoides gallisepticum (strain R(low / passage 15 / clone 2)) (Mycoplasma gallisepticum).